The sequence spans 136 residues: MGARKKISAEKRKEALKTMYFAKLQNVPTSPRKMRLVADMIRGMEVNRALGVLKFSSKEAAARVEKLLRSAIANWEQKNERKAESGELFVTQIFVDGGATLKRMRPAPQGRGYRIRKRSNHVTLFVGAKSNNEDQN.

The protein belongs to the universal ribosomal protein uL22 family. Part of the 50S ribosomal subunit.

Its function is as follows. This protein binds specifically to 23S rRNA; its binding is stimulated by other ribosomal proteins, e.g. L4, L17, and L20. It is important during the early stages of 50S assembly. It makes multiple contacts with different domains of the 23S rRNA in the assembled 50S subunit and ribosome. The globular domain of the protein is located near the polypeptide exit tunnel on the outside of the subunit, while an extended beta-hairpin is found that lines the wall of the exit tunnel in the center of the 70S ribosome. The polypeptide is Large ribosomal subunit protein uL22 (Bacteroides thetaiotaomicron (strain ATCC 29148 / DSM 2079 / JCM 5827 / CCUG 10774 / NCTC 10582 / VPI-5482 / E50)).